A 76-amino-acid polypeptide reads, in one-letter code: uncharacterized protein (76 aa).

A helical transmembrane segment spans residues 20–42; it reads GIVWGPKLAPWGITLGLGAFYFF.

It localises to the membrane. This is an uncharacterized protein from Dictyostelium discoideum (Social amoeba).